The following is a 229-amino-acid chain: Large ribosomal subunit protein uL1 (229 aa).

Belongs to the universal ribosomal protein uL1 family. In terms of assembly, part of the 50S ribosomal subunit.

Its function is as follows. Binds directly to 23S rRNA. The L1 stalk is quite mobile in the ribosome, and is involved in E site tRNA release. Functionally, protein L1 is also a translational repressor protein, it controls the translation of the L11 operon by binding to its mRNA. This is Large ribosomal subunit protein uL1 from Caulobacter sp. (strain K31).